Reading from the N-terminus, the 353-residue chain is Photosystem II D2 protein (353 aa).

Residue Thr2 is modified to N-acetylthreonine. The residue at position 2 (Thr2) is a Phosphothreonine. The helical transmembrane segment at 41–61 (CAYFALGGWFTGTTFVTSWYT) threads the bilayer. His118 is a chlorophyll a binding site. A helical membrane pass occupies residues 125–141 (GFMLRQFELARSVQLRP). Pheophytin a contacts are provided by Gln130 and Asn143. Residues 153-166 (VFVSVFLIYPLGQS) traverse the membrane as a helical segment. A chlorophyll a-binding site is contributed by His198. The chain crosses the membrane as a helical span at residues 208–228 (AALLCAIHGATVENTLFEDGD). His215 and Phe262 together coordinate a plastoquinone. His215 contributes to the Fe cation binding site. His269 is a binding site for Fe cation. The helical transmembrane segment at 279 to 295 (GLWMSALGVVGLALNLR) threads the bilayer.

Belongs to the reaction center PufL/M/PsbA/D family. As to quaternary structure, PSII is composed of 1 copy each of membrane proteins PsbA, PsbB, PsbC, PsbD, PsbE, PsbF, PsbH, PsbI, PsbJ, PsbK, PsbL, PsbM, PsbT, PsbX, PsbY, PsbZ, Psb30/Ycf12, at least 3 peripheral proteins of the oxygen-evolving complex and a large number of cofactors. It forms dimeric complexes. Requires The D1/D2 heterodimer binds P680, chlorophylls that are the primary electron donor of PSII, and subsequent electron acceptors. It shares a non-heme iron and each subunit binds pheophytin, quinone, additional chlorophylls, carotenoids and lipids. There is also a Cl(-1) ion associated with D1 and D2, which is required for oxygen evolution. The PSII complex binds additional chlorophylls, carotenoids and specific lipids. as cofactor.

The protein resides in the plastid. The protein localises to the chloroplast thylakoid membrane. The catalysed reaction is 2 a plastoquinone + 4 hnu + 2 H2O = 2 a plastoquinol + O2. In terms of biological role, photosystem II (PSII) is a light-driven water:plastoquinone oxidoreductase that uses light energy to abstract electrons from H(2)O, generating O(2) and a proton gradient subsequently used for ATP formation. It consists of a core antenna complex that captures photons, and an electron transfer chain that converts photonic excitation into a charge separation. The D1/D2 (PsbA/PsbD) reaction center heterodimer binds P680, the primary electron donor of PSII as well as several subsequent electron acceptors. D2 is needed for assembly of a stable PSII complex. The protein is Photosystem II D2 protein of Populus trichocarpa (Western balsam poplar).